The chain runs to 142 residues: Peptide methionine sulfoxide reductase MsrB (142 aa).

One can recognise a MsrB domain in the interval 3–126 (KEKLKKKLSL…NSAALRFVPF (124 aa)). The Nucleophile role is filled by C115.

It belongs to the MsrB Met sulfoxide reductase family.

The enzyme catalyses L-methionyl-[protein] + [thioredoxin]-disulfide + H2O = L-methionyl-(R)-S-oxide-[protein] + [thioredoxin]-dithiol. The sequence is that of Peptide methionine sulfoxide reductase MsrB from Lactococcus lactis subsp. lactis (strain IL1403) (Streptococcus lactis).